A 302-amino-acid chain; its full sequence is Nucleotide-binding protein Bcep18194_A6125 (302 aa).

8 to 15 (GISGSGKS) is a binding site for ATP. A GTP-binding site is contributed by 57 to 60 (DARS).

This sequence belongs to the RapZ-like family.

Displays ATPase and GTPase activities. The protein is Nucleotide-binding protein Bcep18194_A6125 of Burkholderia lata (strain ATCC 17760 / DSM 23089 / LMG 22485 / NCIMB 9086 / R18194 / 383).